The following is a 1448-amino-acid chain: Gag-Pol polyprotein (1448 aa).

Gly-2 carries the N-myristoyl glycine; by host lipid modification. The short motif at 16–22 (LEKIRLR) is the Nuclear export signal element. The Nuclear localization signal signature appears at 26–32 (KKKYMLK). Disordered regions lie at residues 114-133 (TAETMPKTSRPTAPSSGRGG) and 217-239 (QHPQPAPQQGQLREPSGSDIAGT). Residues 119–128 (PKTSRPTAPS) are compositionally biased toward polar residues. 2 consecutive CCHC-type zinc fingers follow at residues 391–408 (IKCWNCGKEGHSARQCRA) and 412–429 (QGCWKCGKMDHVMAKCPD). Residues 443–464 (EAPQFPHGSSASGADANCSPRG) form a disordered region. The region spanning 517-586 (VEVLLDTGAD…TPINIFGRNL (70 aa)) is the Peptidase A2 domain. Asp-522 functions as the For protease activity; shared with dimeric partner in the catalytic mechanism. The Reverse transcriptase domain occupies 640–830 (DGQLEEAPPT…PPFQWMGYEL (191 aa)). Residues Asp-706, Asp-781, and Asp-782 each coordinate Mg(2+). The tract at residues 823–831 (FQWMGYELW) is RT 'primer grip'. The short motif at 993–1009 (WEQWWTDYWQVTWIPEW) is the Tryptophan repeat motif element. Residues 1029–1152 (IEGEETYYTD…IDHLVSQGIR (124 aa)) form the RNase H type-1 domain. Mg(2+) is bound by residues Asp-1038 and Glu-1073. An Integrase-type zinc finger spans residues 1158 to 1199 (EKIEPAQEEHDKYHSNVKELVFKFGLPRIVARQIVDTCDKCH). Residues His-1167, His-1171, Cys-1195, and Cys-1198 each coordinate Zn(2+). Residues 1209-1359 (VNSDLGTWQM…TPAERLINMI (151 aa)) form the Integrase catalytic domain. Position 1219 (Asp-1219) interacts with Mg(2+). The integrase-type DNA-binding region spans 1378-1425 (FRVYYREGRDQLWKGPGELLWKGEGAVILKVGTDIKVVPRRKAKIIKD). Positions 1426 to 1448 (YGGGKEVDSSSHMEDTGEAREVA) are disordered.

Homotrimer. Interacts with gp41 (via C-terminus). In terms of assembly, homodimer. The active site consists of two apposed aspartic acid residues. As to quaternary structure, heterodimer of p66 RT and p51 RT (RT p66/p51). Heterodimerization of RT is essential for DNA polymerase activity. Despite the sequence identities, p66 RT and p51 RT have distinct folding. Homotetramer; may further associate as a homohexadecamer. Mg(2+) serves as cofactor. Specific enzymatic cleavages by the viral protease yield mature proteins. The protease is released by autocatalytic cleavage. The polyprotein is cleaved during and after budding, this process is termed maturation. Proteolytic cleavage of p66 RT removes the RNase H domain to yield the p51 RT subunit. Post-translationally, capsid protein p24 is phosphorylated.

It is found in the virion. The protein localises to the host nucleus. It localises to the host cytoplasm. Its subcellular location is the host cell membrane. The enzyme catalyses Specific for a P1 residue that is hydrophobic, and P1' variable, but often Pro.. The catalysed reaction is Endohydrolysis of RNA in RNA/DNA hybrids. Three different cleavage modes: 1. sequence-specific internal cleavage of RNA. Human immunodeficiency virus type 1 and Moloney murine leukemia virus enzymes prefer to cleave the RNA strand one nucleotide away from the RNA-DNA junction. 2. RNA 5'-end directed cleavage 13-19 nucleotides from the RNA end. 3. DNA 3'-end directed cleavage 15-20 nucleotides away from the primer terminus.. It carries out the reaction 3'-end directed exonucleolytic cleavage of viral RNA-DNA hybrid.. It catalyses the reaction DNA(n) + a 2'-deoxyribonucleoside 5'-triphosphate = DNA(n+1) + diphosphate. Its activity is regulated as follows. The viral protease is inhibited by many synthetic protease inhibitors (PIs), such as amprenavir, atazanavir, indinavir, loprinavir, nelfinavir, ritonavir and saquinavir. RT can be inhibited either by nucleoside RT inhibitors (NRTIs) or by non nucleoside RT inhibitors (NNRTIs). NRTIs act as chain terminators, whereas NNRTIs inhibit DNA polymerization by binding a small hydrophobic pocket near the RT active site and inducing an allosteric change in this region. Classical NRTIs are abacavir, adefovir (PMEA), didanosine (ddI), lamivudine (3TC), stavudine (d4T), tenofovir (PMPA), zalcitabine (ddC), and zidovudine (AZT). Classical NNRTIs are atevirdine (BHAP U-87201E), delavirdine, efavirenz (DMP-266), emivirine (I-EBU), and nevirapine (BI-RG-587). The tritherapies used as a basic effective treatment of AIDS associate two NRTIs and one NNRTI. Use of protease inhibitors in tritherapy regimens permit more ambitious therapeutic strategies. In terms of biological role, gag-Pol polyprotein and Gag polyprotein may regulate their own translation, by the binding genomic RNA in the 5'-UTR. At low concentration, Gag-Pol and Gag would promote translation, whereas at high concentration, the polyproteins encapsidate genomic RNA and then shut off translation. Functionally, matrix protein p17 has two main functions: in infected cell, it targets Gag and Gag-pol polyproteins to the plasma membrane via a multipartite membrane-binding signal, that includes its myristointegration complex. The myristoylation signal and the NLS exert conflicting influences its subcellular localization. The key regulation of these motifs might be phosphorylation of a portion of MA molecules on the C-terminal tyrosine at the time of virus maturation, by virion-associated cellular tyrosine kinase. Implicated in the release from host cell mediated by Vpu. Capsid protein p24 forms the conical core that encapsulates the genomic RNA-nucleocapsid complex in the virion. The core is constituted by capsid protein hexamer subunits. The core is disassembled soon after virion entry. Interaction with host PPIA/CYPA protects the virus from restriction by host TRIM5-alpha and from an unknown antiviral activity in host cells. This capsid restriction by TRIM5 is one of the factors which restricts SIV to the simian species. Its function is as follows. Nucleocapsid protein p7 encapsulates and protects viral dimeric unspliced (genomic) RNA. Binds these RNAs through its zinc fingers. Facilitates rearangement of nucleic acid secondary structure during retrotranscription of genomic RNA. This capability is referred to as nucleic acid chaperone activity. In terms of biological role, the aspartyl protease mediates proteolytic cleavages of Gag and Gag-Pol polyproteins during or shortly after the release of the virion from the plasma membrane. Cleavages take place as an ordered, step-wise cascade to yield mature proteins. This process is called maturation. Displays maximal activity during the budding process just prior to particle release from the cell. Also cleaves Nef and Vif, probably concomitantly with viral structural proteins on maturation of virus particles. Hydrolyzes host EIF4GI and PABP1 in order to shut off the capped cellular mRNA translation. The resulting inhibition of cellular protein synthesis serves to ensure maximal viral gene expression and to evade host immune response. Functionally, reverse transcriptase/ribonuclease H (RT) is a multifunctional enzyme that converts the viral dimeric RNA genome into dsDNA in the cytoplasm, shortly after virus entry into the cell. This enzyme displays a DNA polymerase activity that can copy either DNA or RNA templates, and a ribonuclease H (RNase H) activity that cleaves the RNA strand of RNA-DNA heteroduplexes in a partially processive 3' to 5' endonucleasic mode. Conversion of viral genomic RNA into dsDNA requires many steps. A tRNA binds to the primer-binding site (PBS) situated at the 5'-end of the viral RNA. RT uses the 3' end of the tRNA primer to perform a short round of RNA-dependent minus-strand DNA synthesis. The reading proceeds through the U5 region and ends after the repeated (R) region which is present at both ends of viral RNA. The portion of the RNA-DNA heteroduplex is digested by the RNase H, resulting in a ssDNA product attached to the tRNA primer. This ssDNA/tRNA hybridizes with the identical R region situated at the 3' end of viral RNA. This template exchange, known as minus-strand DNA strong stop transfer, can be either intra- or intermolecular. RT uses the 3' end of this newly synthesized short ssDNA to perform the RNA-dependent minus-strand DNA synthesis of the whole template. RNase H digests the RNA template except for two polypurine tracts (PPTs) situated at the 5'-end and near the center of the genome. It is not clear if both polymerase and RNase H activities are simultaneous. RNase H can probably proceed both in a polymerase-dependent (RNA cut into small fragments by the same RT performing DNA synthesis) and a polymerase-independent mode (cleavage of remaining RNA fragments by free RTs). Secondly, RT performs DNA-directed plus-strand DNA synthesis using the PPTs that have not been removed by RNase H as primers. PPTs and tRNA primers are then removed by RNase H. The 3' and 5' ssDNA PBS regions hybridize to form a circular dsDNA intermediate. Strand displacement synthesis by RT to the PBS and PPT ends produces a blunt ended, linear dsDNA copy of the viral genome that includes long terminal repeats (LTRs) at both ends. Integrase catalyzes viral DNA integration into the host chromosome, by performing a series of DNA cutting and joining reactions. This enzyme activity takes place after virion entry into a cell and reverse transcription of the RNA genome in dsDNA. The first step in the integration process is 3' processing. This step requires a complex comprising the viral genome, matrix protein, Vpr and integrase. This complex is called the pre-integration complex (PIC). The integrase protein removes 2 nucleotides from each 3' end of the viral DNA, leaving recessed CA OH's at the 3' ends. In the second step, the PIC enters cell nucleus. This process is mediated through integrase and Vpr proteins, and allows the virus to infect a non dividing cell. This ability to enter the nucleus is specific of lentiviruses, other retroviruses cannot and rely on cell division to access cell chromosomes. In the third step, termed strand transfer, the integrase protein joins the previously processed 3' ends to the 5' ends of strands of target cellular DNA at the site of integration. The 5'-ends are produced by integrase-catalyzed staggered cuts, 5 bp apart. A Y-shaped, gapped, recombination intermediate results, with the 5'-ends of the viral DNA strands and the 3' ends of target DNA strands remaining unjoined, flanking a gap of 5 bp. The last step is viral DNA integration into host chromosome. This involves host DNA repair synthesis in which the 5 bp gaps between the unjoined strands are filled in and then ligated. Since this process occurs at both cuts flanking the SIV genome, a 5 bp duplication of host DNA is produced at the ends of SIV integration. Alternatively, Integrase may catalyze the excision of viral DNA just after strand transfer, this is termed disintegration. This chain is Gag-Pol polyprotein (gag-pol), found in Simian immunodeficiency virus (isolate Mm251) (SIV-mac).